The following is a 306-amino-acid chain: MKFVSIISNSRMLFLFLLITAKSDRESCLYIFDENIRGVNITPTFVSTRAKGLFDLFIKKLRSRVALSFFLLKRKIKLEETIVYGADHLSHSLLFLKKCSFFLIEDGTENYHQKSYKRSWKNKLFSIPKFGMYKNVKRIYLTKRENVPDCIKSKVEYINIKDLWFKKTEEEKLEILYLLGIDMKKIQLLIGEPFILFTQPLSEDYILTENEKIELYKSIIDKYDASKLVIKPHPREKTDYSRIFPNVKVFDETYPSEVLDILEVKFSRVITLFSTAAFSYPKEKVDFYGTKIHPKLLAKFGNIEYE.

This is an uncharacterized protein from Haemophilus influenzae (strain ATCC 51907 / DSM 11121 / KW20 / Rd).